A 350-amino-acid polypeptide reads, in one-letter code: FAD:protein FMN transferase (350 aa).

A signal peptide spans 1–19; that stretch reads MDMTFFRAALLGACVLLSG. The N-palmitoyl cysteine moiety is linked to residue cysteine 20. The S-diacylglycerol cysteine moiety is linked to residue cysteine 20. Residues methionine 41, tryptophan 78, 119 to 121, and aspartate 181 each bind FAD; that span reads AMD. Residue threonine 184 coordinates Mg(2+). 2 residues coordinate FAD: glutamate 187 and isoleucine 272. Mg(2+)-binding residues include aspartate 298, aspartate 301, and threonine 302.

The protein belongs to the ApbE family. It depends on Mg(2+) as a cofactor.

It localises to the cell inner membrane. It catalyses the reaction L-threonyl-[protein] + FAD = FMN-L-threonyl-[protein] + AMP + H(+). Flavin transferase that catalyzes the transfer of the FMN moiety of FAD and its covalent binding to the hydroxyl group of a threonine residue in a target flavoprotein such as NqrB and NqrC, two subunits of the NQR complex. The polypeptide is FAD:protein FMN transferase (Klebsiella pneumoniae (strain 342)).